A 321-amino-acid polypeptide reads, in one-letter code: Fe-S cluster assembly protein DRE2 (321 aa).

The segment at 1–161 (MPAPVPPTAF…STPVTLSGAR (161 aa)) is N-terminal SAM-like domain. The tract at residues 123-168 (PSPSTLAYTSPSAPSLPTVASDPSPAPSSSTPVTLSGARPLQLRRN) is disordered. The segment covering 139–156 (PTVASDPSPAPSSSTPVT) has biased composition (low complexity). The linker stretch occupies residues 162–197 (PLQLRRNGDKARKAALWAIDSPLIPDGGKSLLTPAD). [2Fe-2S] cluster is bound by residues Cys-203, Cys-219, Cys-222, and Cys-224. Residues 203-224 (CVFPAENGKPVKRRRACKDCTC) are fe-S binding site A. The [4Fe-4S] cluster site is built by Cys-285, Cys-288, Cys-296, and Cys-299. Short sequence motifs (cx2C motif) lie at residues 285–288 (CGSC) and 296–299 (CSSC). The segment at 285 to 299 (CGSCYLGDAFRCSSC) is fe-S binding site B.

It belongs to the anamorsin family. In terms of assembly, monomer. Interacts with TAH18. Interacts with MIA40. The cofactor is [2Fe-2S] cluster. It depends on [4Fe-4S] cluster as a cofactor.

Its subcellular location is the cytoplasm. It is found in the mitochondrion intermembrane space. Functionally, component of the cytosolic iron-sulfur (Fe-S) protein assembly (CIA) machinery required for the maturation of extramitochondrial Fe-S proteins. Part of an electron transfer chain functioning in an early step of cytosolic Fe-S biogenesis, facilitating the de novo assembly of a [4Fe-4S] cluster on the scaffold complex CFD1-NBP35. Electrons are transferred to DRE2 from NADPH via the FAD- and FMN-containing protein TAH18. TAH18-DRE2 are also required for the assembly of the diferric tyrosyl radical cofactor of ribonucleotide reductase (RNR), probably by providing electrons for reduction during radical cofactor maturation in the catalytic small subunit RNR2. The sequence is that of Fe-S cluster assembly protein DRE2 from Cryptococcus neoformans var. neoformans serotype D (strain B-3501A) (Filobasidiella neoformans).